An 84-amino-acid polypeptide reads, in one-letter code: MAHKKAGGSSRNGRDSNGQRRGVKRYGGEIVRAGNILVRQVGTRIHPGENVGMGRDYTLFATIDGKVAYERKGRDKKKVSVYPV.

Positions 1–25 (MAHKKAGGSSRNGRDSNGQRRGVKR) are disordered.

It belongs to the bacterial ribosomal protein bL27 family.

The chain is Large ribosomal subunit protein bL27 from Desulfatibacillum aliphaticivorans.